Consider the following 215-residue polypeptide: Beta-crystallin A3-2 (215 aa).

The N-terminal arm stretch occupies residues 1–30; sequence MEIPAIQTEREDITSEKMAQINPLPVPLGP. Beta/gamma crystallin 'Greek key' domains lie at 31-70 and 71-117; these read WKIT…KVEC and GAWI…RPIC. The connecting peptide stretch occupies residues 118–123; sequence SANHEE. Beta/gamma crystallin 'Greek key' domains follow at residues 124-165 and 166-214; these read SKLV…KVQC and GAWV…RRIQ.

The protein belongs to the beta/gamma-crystallin family. Homo/heterodimer, or complexes of higher-order. The structure of beta-crystallin oligomers seems to be stabilized through interactions between the N-terminal arms. The N-terminus is blocked.

Crystallins are the dominant structural components of the vertebrate eye lens. The chain is Beta-crystallin A3-2 from Aquarana catesbeiana (American bullfrog).